We begin with the raw amino-acid sequence, 841 residues long: MKIPLRFLLISLVPTLSMSNLLGAATTEELSASNSFDGTTSTTSFSSKTSSATDGTNYVFKDSVVIENVPKTGETQSTSCFKNDAAAGDLNFLGGGFSFTFSNIDATTASGAAIGSEAANKTVTLSGFSALSFLKSPASTVTNGLGAINVKGNLSLLDNDKVLIQDNFSTGDGGAINCAGSLKIANNKSLSFIGNSSSTRGGAIHTKNLTLSSGGETLFQGNTAPTAAGKGGAIAIADSGTLSISGDSGDIIFEGNTIGATGTVSHSAIDLGTSAKITALRAAQGHTIYFYDPITVTGSTSVADALNINSPDTGDNKEYTGTIVFSGEKLTEAEAKDEKNRTSKLLQNVAFKNGTVVLKGDVVLSANGFSQDANSKLIMDLGTSLVANTESIELTNLEINIDSLRNGKKIKLSAATAQKDIRIDRPVVLAISDESFYQNGFLNEDHSYDGILELDAGKDIVISADSRSIDAVQSPYGYQGKWTINWSTDDKKATVSWAKQSFNPTAEQEAPLVPNLLWGSFIDVRSFQNFIELGTEGAPYEKRFWVAGISNVLHRSGRENQRKFRHVSGGAVVGASTRMPGGDTLSLGFAQLFARDKDYFMNTNFAKTYAGSLRLQHDASLYSVVSILLGEGGLREILLPYVSKTLPCSFYGQLSYGHTDHRMKTESLPPPPPTLSTDHTSWGGYVWAGELGTRVAVENTSGRGFFQEYTPFVKVQAVYARQDSFVELGAISRDFSDSHLYNLAIPLGIKLEKRFAEQYYHVVAMYSPDVCRSNPKCTTTLLSNQGSWKTKGSNLARQAGIVQASGFRSLGAAAELFGNFGFEWRGSSRSYNVDAGSKIKF.

A signal peptide spans 1–24 (MKIPLRFLLISLVPTLSMSNLLGA). The Autotransporter domain occupies 537-841 (GAPYEKRFWV…NVDAGSKIKF (305 aa)).

It belongs to the PMP outer membrane protein family.

Its subcellular location is the secreted. It localises to the cell wall. It is found in the cell outer membrane. This Chlamydia pneumoniae (Chlamydophila pneumoniae) protein is Probable outer membrane protein pmp2 (pmp2).